Consider the following 256-residue polypeptide: Thiazole synthase (256 aa).

Lysine 95 (schiff-base intermediate with DXP) is an active-site residue. Residues glycine 156, 182-183 (AG), and 204-205 (NT) each bind 1-deoxy-D-xylulose 5-phosphate.

The protein belongs to the ThiG family. Homotetramer. Forms heterodimers with either ThiH or ThiS.

The protein resides in the cytoplasm. The enzyme catalyses [ThiS sulfur-carrier protein]-C-terminal-Gly-aminoethanethioate + 2-iminoacetate + 1-deoxy-D-xylulose 5-phosphate = [ThiS sulfur-carrier protein]-C-terminal Gly-Gly + 2-[(2R,5Z)-2-carboxy-4-methylthiazol-5(2H)-ylidene]ethyl phosphate + 2 H2O + H(+). It participates in cofactor biosynthesis; thiamine diphosphate biosynthesis. Functionally, catalyzes the rearrangement of 1-deoxy-D-xylulose 5-phosphate (DXP) to produce the thiazole phosphate moiety of thiamine. Sulfur is provided by the thiocarboxylate moiety of the carrier protein ThiS. In vitro, sulfur can be provided by H(2)S. The protein is Thiazole synthase of Escherichia coli (strain K12 / MC4100 / BW2952).